Consider the following 1186-residue polypeptide: Pumilio homolog 1 (1186 aa).

Serine 2 carries the post-translational modification N-acetylserine. Serine 19 is modified (phosphoserine). The tract at residues 22–73 (LKHHPQEPANPNMPVVLTSGTGSQAQPQPAANQALAAGTHSSPVPGSIGVAG) is disordered. Positions 45 to 58 (QAQPQPAANQALAA) are enriched in low complexity. 3 positions are modified to phosphoserine: serine 75, serine 98, and serine 106. The residue at position 112 (threonine 112) is a Phosphothreonine. Serine 124, serine 159, serine 197, serine 209, and serine 229 each carry phosphoserine. Positions 233 to 272 (SCLRKGGFGPRDADSDENDKGEKKNKGTFDGDKLGDLKEE) are disordered. Residues 250–272 (NDKGEKKNKGTFDGDKLGDLKEE) show a composition bias toward basic and acidic residues. At serine 305 the chain carries Phosphoserine. Residues 485–502 (TNSANQQTTPQAQQGQQQ) are compositionally biased toward low complexity. 2 disordered regions span residues 485–524 (TNSA…GQQT) and 613–648 (AGTT…FYGN). Positions 511 to 524 (RPLTPNQNQQGQQT) are enriched in polar residues. Threonine 514 is subject to Phosphothreonine. Residues 626-639 (QQPQPQPQQQPNNN) show a composition bias toward low complexity. Phosphoserine occurs at positions 709 and 714. Residues 742-775 (GPVGMPLPSQGPGHSQTPPPSLSSHGSSSSLNLG) are disordered. The segment covering 763–775 (LSSHGSSSSLNLG) has biased composition (low complexity). Residue arginine 796 is modified to Omega-N-methylarginine. Phosphoserine occurs at positions 806 and 822. Residues 828-1168 (GRSRLLEDFR…HILAKLEKYY (341 aa)) form the PUM-HD domain. Pumilio repeat units lie at residues 848–883 (EIAG…LVFN), 884–919 (EILQ…ALAE), 920–955 (RIRG…EMVR), 956–991 (ELDG…FIID), 992–1027 (AFKG…PILE), 1028–1063 (ELHQ…KIVA), 1064–1099 (EIRG…VLID), and 1103–1142 (TMND…IVMH). The interval 863-867 (SRFIQ) is adenine-nucleotide binding in RNA target. The uracil-nucleotide binding in RNA target stretch occupies residues 899–903 (NYVIQ). An adenine-nucleotide binding in RNA target region spans residues 935–939 (CRVIQ). The segment at 971–975 (NHVVQ) is non-specific-nucleotide binding in RNA target. The adenine-nucleotide binding in RNA target stretch occupies residues 1007-1011 (CRVIQ). Residues 1043 to 1047 (NYVIQ) form a uracil-nucleotide binding in RNA target region. 2 guanine-nucleotide binding in RNA target regions span residues 1079–1083 (SNVVE) and 1080–1083 (NVVE). The uracil-nucleotide binding in RNA target stretch occupies residues 1122–1126 (NYVVQ).

As to quaternary structure, recruits the CCR4-POP2-NOT deadenylase leading to translational inhibition and mRNA degradation. Interacts with TRIM71 (via NHL repeats) in an RNA-dependent manner. Phosphorylation at Ser-714 promotes RNA-binding activity. Following growth factor stimulation phosphorylated at Ser-714, promoting binding to the 3'-UTR of CDKN1B/p27 mRNA.

Its subcellular location is the cytoplasm. It is found in the P-body. The protein resides in the cytoplasmic granule. Sequence-specific RNA-binding protein that acts as a post-transcriptional repressor by binding the 3'-UTR of mRNA targets. Binds to an RNA consensus sequence, the Pumilio Response Element (PRE), 5'-UGUANAUA-3', that is related to the Nanos Response Element (NRE). Mediates post-transcriptional repression of transcripts via different mechanisms: acts via direct recruitment of the CCR4-POP2-NOT deadenylase leading to translational inhibition and mRNA degradation. Also mediates deadenylation-independent repression by promoting accessibility of miRNAs. Following growth factor stimulation, phosphorylated and binds to the 3'-UTR of CDKN1B/p27 mRNA, inducing a local conformational change that exposes miRNA-binding sites, promoting association of miR-221 and miR-222, efficient suppression of CDKN1B/p27 expression, and rapid entry to the cell cycle. Acts as a post-transcriptional repressor of E2F3 mRNAs by binding to its 3'-UTR and facilitating miRNA regulation. Represses a program of genes necessary to maintain genomic stability such as key mitotic, DNA repair and DNA replication factors. Its ability to repress those target mRNAs is regulated by the lncRNA NORAD (non-coding RNA activated by DNA damage) which, due to its high abundance and multitude of PUMILIO binding sites, is able to sequester a significant fraction of PUM1 and PUM2 in the cytoplasm. Involved in neuronal functions by regulating ATXN1 mRNA levels: acts by binding to the 3'-UTR of ATXN1 transcripts, leading to their down-regulation independently of the miRNA machinery. Plays a role in cytoplasmic sensing of viral infection. In testis, acts as a post-transcriptional regulator of spermatogenesis by binding to the 3'-UTR of mRNAs coding for regulators of p53/TP53. Involved in embryonic stem cell renewal by facilitating the exit from the ground state: acts by targeting mRNAs coding for naive pluripotency transcription factors and accelerates their down-regulation at the onset of differentiation. Binds specifically to miRNA MIR199A precursor, with PUM2, regulates miRNA MIR199A expression at a postranscriptional level. This chain is Pumilio homolog 1 (PUM1), found in Pongo abelii (Sumatran orangutan).